The following is a 1380-amino-acid chain: DNA-directed RNA polymerase subunit beta (1380 aa).

This sequence belongs to the RNA polymerase beta chain family. As to quaternary structure, the RNAP catalytic core consists of 2 alpha, 1 beta, 1 beta' and 1 omega subunit. When a sigma factor is associated with the core the holoenzyme is formed, which can initiate transcription.

The enzyme catalyses RNA(n) + a ribonucleoside 5'-triphosphate = RNA(n+1) + diphosphate. DNA-dependent RNA polymerase catalyzes the transcription of DNA into RNA using the four ribonucleoside triphosphates as substrates. The sequence is that of DNA-directed RNA polymerase subunit beta from Ehrlichia ruminantium (strain Welgevonden).